We begin with the raw amino-acid sequence, 205 residues long: Thymidine kinase (205 aa).

ATP contacts are provided by residues 9-16 and 88-91; these read SAMNAGKT and DECH. The Proton acceptor role is filled by E89. C146, C148, C183, and H186 together coordinate Zn(2+).

This sequence belongs to the thymidine kinase family. In terms of assembly, homotetramer.

The protein localises to the cytoplasm. It catalyses the reaction thymidine + ATP = dTMP + ADP + H(+). This Blochmanniella pennsylvanica (strain BPEN) protein is Thymidine kinase.